Reading from the N-terminus, the 559-residue chain is Chaperonin GroEL 1 (559 aa).

Residues 29–32 (TIGP), 86–90 (DGTTT), Gly413, 476–478 (NAL), and Asp492 contribute to the ATP site. Positions 521 to 541 (KPEPPAPAPAGDGDPMGGMGG) are disordered.

This sequence belongs to the chaperonin (HSP60) family. Forms a cylinder of 14 subunits composed of two heptameric rings stacked back-to-back. Interacts with the co-chaperonin GroES.

The protein resides in the cytoplasm. The enzyme catalyses ATP + H2O + a folded polypeptide = ADP + phosphate + an unfolded polypeptide.. Its function is as follows. Together with its co-chaperonin GroES, plays an essential role in assisting protein folding. The GroEL-GroES system forms a nano-cage that allows encapsulation of the non-native substrate proteins and provides a physical environment optimized to promote and accelerate protein folding. In Synechococcus sp. (strain CC9605), this protein is Chaperonin GroEL 1.